Consider the following 431-residue polypeptide: Glucose-1-phosphate adenylyltransferase (431 aa).

Lysine 39 lines the beta-D-fructose 1,6-bisphosphate pocket. Arginine 40, histidine 46, and arginine 52 together coordinate AMP. Residue tyrosine 114 coordinates alpha-D-glucose 1-phosphate. Arginine 130 lines the AMP pocket. Alpha-D-glucose 1-phosphate-binding positions include glycine 179, 194–195, and serine 212; that span reads EK. The AMP site is built by glutamate 370 and arginine 386. Residues 419–423 and 429–431 each bind beta-D-fructose 1,6-bisphosphate; these read REMLR and QER.

Belongs to the bacterial/plant glucose-1-phosphate adenylyltransferase family. In terms of assembly, homotetramer.

The enzyme catalyses alpha-D-glucose 1-phosphate + ATP + H(+) = ADP-alpha-D-glucose + diphosphate. It functions in the pathway glycan biosynthesis; glycogen biosynthesis. With respect to regulation, allosterically activated by fructose-1,6-bisphosphate (F16BP) and inhibited by AMP. Involved in the biosynthesis of ADP-glucose, a building block required for the elongation reactions to produce glycogen. Catalyzes the reaction between ATP and alpha-D-glucose 1-phosphate (G1P) to produce pyrophosphate and ADP-Glc. The polypeptide is Glucose-1-phosphate adenylyltransferase (Salmonella arizonae (strain ATCC BAA-731 / CDC346-86 / RSK2980)).